Here is a 41-residue protein sequence, read N- to C-terminus: MVRVQRRVLKNFMRVVGVDKGYRLWVEWLSCVCCGYVVRAE.

This is an uncharacterized protein from Treponema pallidum (strain Nichols).